The following is a 275-amino-acid chain: TATA-box-binding protein (275 aa).

Disordered regions lie at residues 23–45 (EDESIQTQQQQQTPRHPASFGMN) and 73–92 (GSMSIYGPGTPAPATPHTPA). 2 repeat units span residues 103–179 (LENI…ARIV) and 193–270 (IQNM…YPIL).

It belongs to the TBP family. Belongs to the TFIID complex together with the TBP-associated factors (TAFs). Binds DNA as monomer.

It is found in the nucleus. Functionally, general transcription factor that functions at the core of the DNA-binding multiprotein factor TFIID. Binding of TFIID to the TATA box is the initial transcriptional step of the pre-initiation complex (PIC), playing a role in the activation of eukaryotic genes transcribed by RNA polymerase II. This chain is TATA-box-binding protein, found in Artemia franciscana (Brine shrimp).